The following is a 245-amino-acid chain: 1-(5-phosphoribosyl)-5-[(5-phosphoribosylamino)methylideneamino] imidazole-4-carboxamide isomerase (245 aa).

Asp-8 functions as the Proton acceptor in the catalytic mechanism. Asp-131 acts as the Proton donor in catalysis.

This sequence belongs to the HisA/HisF family.

It is found in the cytoplasm. The enzyme catalyses 1-(5-phospho-beta-D-ribosyl)-5-[(5-phospho-beta-D-ribosylamino)methylideneamino]imidazole-4-carboxamide = 5-[(5-phospho-1-deoxy-D-ribulos-1-ylimino)methylamino]-1-(5-phospho-beta-D-ribosyl)imidazole-4-carboxamide. It functions in the pathway amino-acid biosynthesis; L-histidine biosynthesis; L-histidine from 5-phospho-alpha-D-ribose 1-diphosphate: step 4/9. The chain is 1-(5-phosphoribosyl)-5-[(5-phosphoribosylamino)methylideneamino] imidazole-4-carboxamide isomerase from Neisseria meningitidis serogroup C / serotype 2a (strain ATCC 700532 / DSM 15464 / FAM18).